The sequence spans 408 residues: Protein ZNF365 (408 aa).

At S16 the chain carries Phosphoserine. A C2H2-type; degenerate zinc finger spans residues 26–51 (FRCPRCGDHTRFRSLSSLRAHLEFSH). S139 and S146 each carry phosphoserine. Positions 170-298 (VEAVDRTIEK…QLEYYQSQQA (129 aa)) form a coiled coil. Residue T176 is modified to Phosphothreonine. S370 bears the Phosphoserine mark.

In terms of assembly, homodimers. Interacts with NDE1 and NDEL1. Interacts with DISC1. Interacts with PARP1. Interacts with MCRS1. Expressed in cerebral cortex, hippocampus, olfactory tubercle and striatum.

The protein localises to the cytoplasm. It is found in the cytoskeleton. It localises to the microtubule organizing center. The protein resides in the centrosome. Functionally, involved in the positive regulation of oligodendrocyte differentiation during postnatal growth. Involved in the morphogenesis of basket cells in the somatosensory cortex during embryogenesis. Involved in dendritic arborization, morphogenesis of spine density dendrite, and establishment of postsynaptic dendrite density in cortical pyramidal neurons. Involved in the regulation of neurogenesis. Negatively regulates neurite outgrowth. Involved in homologous recombination (HR) repair pathway. Required for proper resolution of DNA double-strand breaks (DSBs) by HR. Is required for recovery of stalled replication forks, and directly contributes to genomic stability. Interacts with PARP1 and mediates MRE11-dependent DNA end resection during replication fork recovery. Contributes to genomic stability by preventing telomere dysfunction. The polypeptide is Protein ZNF365 (Znf365) (Rattus norvegicus (Rat)).